The following is a 212-amino-acid chain: Pyrrolidone-carboxylate peptidase (212 aa).

Catalysis depends on residues Glu78, Cys141, and His165.

This sequence belongs to the peptidase C15 family. Homotetramer.

The protein localises to the cytoplasm. The enzyme catalyses Release of an N-terminal pyroglutamyl group from a polypeptide, the second amino acid generally not being Pro.. Functionally, removes 5-oxoproline from various penultimate amino acid residues except L-proline. This chain is Pyrrolidone-carboxylate peptidase, found in Staphylococcus haemolyticus (strain JCSC1435).